The primary structure comprises 231 residues: 5'-methylthioadenosine/S-adenosylhomocysteine nucleosidase (231 aa).

Glu12 functions as the Proton acceptor in the catalytic mechanism. Residues Gly78, Ile153, and Met174–Glu175 contribute to the substrate site. Asp198 serves as the catalytic Proton donor.

It belongs to the PNP/UDP phosphorylase family. MtnN subfamily.

The catalysed reaction is S-adenosyl-L-homocysteine + H2O = S-(5-deoxy-D-ribos-5-yl)-L-homocysteine + adenine. It carries out the reaction S-methyl-5'-thioadenosine + H2O = 5-(methylsulfanyl)-D-ribose + adenine. The enzyme catalyses 5'-deoxyadenosine + H2O = 5-deoxy-D-ribose + adenine. It participates in amino-acid biosynthesis; L-methionine biosynthesis via salvage pathway; S-methyl-5-thio-alpha-D-ribose 1-phosphate from S-methyl-5'-thioadenosine (hydrolase route): step 1/2. Catalyzes the irreversible cleavage of the glycosidic bond in both 5'-methylthioadenosine (MTA) and S-adenosylhomocysteine (SAH/AdoHcy) to adenine and the corresponding thioribose, 5'-methylthioribose and S-ribosylhomocysteine, respectively. Also cleaves 5'-deoxyadenosine, a toxic by-product of radical S-adenosylmethionine (SAM) enzymes, into 5-deoxyribose and adenine. This is 5'-methylthioadenosine/S-adenosylhomocysteine nucleosidase from Shewanella sp. (strain W3-18-1).